The following is a 522-amino-acid chain: WEB family protein At2g38370 (522 aa).

The segment at Met1–Phe32 is disordered. Coiled-coil stretches lie at residues Glu77–Glu264 and Ala299–Asn376. 2 disordered regions span residues Ser374 to Glu397 and Met458 to Lys493. Positions Thr473 to Arg486 are enriched in basic and acidic residues.

This sequence belongs to the WEB family.

The chain is WEB family protein At2g38370 from Arabidopsis thaliana (Mouse-ear cress).